Here is a 671-residue protein sequence, read N- to C-terminus: DNA ligase (671 aa).

Residues 32–36 (DAEYD), 81–82 (SL), and Glu113 contribute to the NAD(+) site. Residue Lys115 is the N6-AMP-lysine intermediate of the active site. NAD(+) is bound by residues Arg136, Glu173, Lys290, and Lys314. Residues Cys408, Cys411, Cys426, and Cys432 each contribute to the Zn(2+) site. Residues 593–671 (EIDSPFAGKT…EAEMIRLLGA (79 aa)) enclose the BRCT domain.

Belongs to the NAD-dependent DNA ligase family. LigA subfamily. Mg(2+) is required as a cofactor. Requires Mn(2+) as cofactor.

The catalysed reaction is NAD(+) + (deoxyribonucleotide)n-3'-hydroxyl + 5'-phospho-(deoxyribonucleotide)m = (deoxyribonucleotide)n+m + AMP + beta-nicotinamide D-nucleotide.. Its function is as follows. DNA ligase that catalyzes the formation of phosphodiester linkages between 5'-phosphoryl and 3'-hydroxyl groups in double-stranded DNA using NAD as a coenzyme and as the energy source for the reaction. It is essential for DNA replication and repair of damaged DNA. In Salmonella paratyphi B (strain ATCC BAA-1250 / SPB7), this protein is DNA ligase.